The chain runs to 258 residues: Tryptophan synthase alpha chain (258 aa).

Active-site proton acceptor residues include Glu52 and Asp63.

The protein belongs to the TrpA family. Tetramer of two alpha and two beta chains.

The catalysed reaction is (1S,2R)-1-C-(indol-3-yl)glycerol 3-phosphate + L-serine = D-glyceraldehyde 3-phosphate + L-tryptophan + H2O. The protein operates within amino-acid biosynthesis; L-tryptophan biosynthesis; L-tryptophan from chorismate: step 5/5. Its function is as follows. The alpha subunit is responsible for the aldol cleavage of indoleglycerol phosphate to indole and glyceraldehyde 3-phosphate. This chain is Tryptophan synthase alpha chain, found in Streptococcus pneumoniae serotype 2 (strain D39 / NCTC 7466).